The sequence spans 144 residues: Large ribosomal subunit protein uL15 (144 aa).

Residues 1–49 (MRLNTLSPAAGAKSAAKRVGRGIGSGTGKTCGRGHKGQKSRSGGGVRVG) form a disordered region. Residues 21–31 (RGIGSGTGKTC) show a composition bias toward gly residues.

Belongs to the universal ribosomal protein uL15 family. As to quaternary structure, part of the 50S ribosomal subunit.

Functionally, binds to the 23S rRNA. The sequence is that of Large ribosomal subunit protein uL15 from Shewanella halifaxensis (strain HAW-EB4).